Reading from the N-terminus, the 283-residue chain is Peflin (283 aa).

Repeat copies occupy residues 21-30 (PQTNYYGGQQ), 36-44 (QPAASYGRP), 45-54 (APGAPYGSPP), 55-62 (SGGVYGHP), 71-79 (APGGPYGGQ), 80-87 (APGGPYSV), 88-95 (PGSTPYGS), and 96-104 (QQHGSYGQG). The tract at residues 21–104 (PQTNYYGGQQ…SQQHGSYGQG (84 aa)) is 8 X 9 AA approximate tandem repeat of [AP]-P-G-G-P-Y-G-G-P-P. A compositionally biased stretch (low complexity) spans 37 to 70 (PAASYGRPAPGAPYGSPPSGGVYGHPVPGSAAPG). Residues 37–113 (PAASYGRPAP…GAPAGNIPPG (77 aa)) form a disordered region. Residues 71–81 (APGGPYGGQAP) show a composition bias toward gly residues. The segment covering 93–104 (YGSQQHGSYGQG) has biased composition (low complexity). EF-hand domains lie at 113–148 (GVDP…TNWS), 154–179 (TCTM…SALW), 180–215 (RFIQ…MGYQ), 216–252 (LSPQ…LQSM), and 253–282 (TEAF…TTRL). Ca(2+)-binding residues include aspartate 126, aspartate 128, serine 130, tyrosine 132, and glutamate 137. 5 residues coordinate Ca(2+): aspartate 193, aspartate 195, serine 197, serine 199, and glutamate 204.

Heterodimer; heterodimerizes (via the EF-hand 5) with pdcd6.

The protein resides in the cytoplasm. The protein localises to the endoplasmic reticulum. It localises to the membrane. It is found in the cytoplasmic vesicle. Its subcellular location is the COPII-coated vesicle membrane. Functionally, calcium-binding protein that acts as an adapter that bridges unrelated proteins or stabilizes weak protein-protein complexes in response to calcium. Acts as a negative regulator of ER-Golgi transport. The chain is Peflin from Xenopus laevis (African clawed frog).